Reading from the N-terminus, the 717-residue chain is Delta-1-pyrroline-5-carboxylate synthase (717 aa).

The interval 1–296 (MDAVDSTRAF…WAPVGDVGAR (296 aa)) is glutamate 5-kinase. Residues Ser60, Asp157, and Asn176 each contribute to the substrate site. Residues 196–197 (SD) and 236–242 (RGGMTAK) each bind ATP. A gamma-glutamyl phosphate reductase region spans residues 297–717 (DMAVAARESS…YTHKDLTSHA (421 aa)).

It in the N-terminal section; belongs to the glutamate 5-kinase family. This sequence in the C-terminal section; belongs to the gamma-glutamyl phosphate reductase family. As to expression, expressed at high levels in leaves and is inducible in roots subjected to salt stress.

It carries out the reaction L-glutamate + ATP = L-glutamyl 5-phosphate + ADP. It catalyses the reaction L-glutamate 5-semialdehyde + phosphate + NADP(+) = L-glutamyl 5-phosphate + NADPH + H(+). It participates in amino-acid biosynthesis; L-proline biosynthesis; L-glutamate 5-semialdehyde from L-glutamate: step 1/2. Its pathway is amino-acid biosynthesis; L-proline biosynthesis; L-glutamate 5-semialdehyde from L-glutamate: step 2/2. Feedback regulated by proline. Functionally, P5CS plays a key role in proline biosynthesis, leading to osmoregulation in plants. The protein is Delta-1-pyrroline-5-carboxylate synthase of Actinidia deliciosa (Kiwi).